Reading from the N-terminus, the 475-residue chain is E3 ubiquitin-protein ligase TRIM62 (475 aa).

The segment at 11–54 (CSICLSIYQDPVSLGCEHYFCRRCITEHWVRQEAQGARDCPECR) adopts an RING-type zinc-finger fold. The B box-type zinc-finger motif lies at 88-128 (RAARPCQAHDKVKLFCLTDRALLCFFCDEPALHEQHQVTGI). Residues cysteine 93, histidine 96, cysteine 114, and histidine 120 each coordinate Zn(2+). Residues 127-241 (GIDDAFDELQ…LQERLAETDR (115 aa)) adopt a coiled-coil conformation. The region spanning 277 to 475 (PLQYTIWKSL…QPLRINTVRI (199 aa)) is the B30.2/SPRY domain.

The protein belongs to the TRIM/RBCC family. As to quaternary structure, interacts with the ubiquitin-conjugating enzyme, UBE2D2. Polyubiquitinated, autoubiquitinated in the presence of UBE2D2.

The protein resides in the cytoplasm. It carries out the reaction S-ubiquitinyl-[E2 ubiquitin-conjugating enzyme]-L-cysteine + [acceptor protein]-L-lysine = [E2 ubiquitin-conjugating enzyme]-L-cysteine + N(6)-ubiquitinyl-[acceptor protein]-L-lysine.. It functions in the pathway protein modification; protein ubiquitination. E3 ubiquitin ligase that plays a role in antifungal immunity by mediating 'Lys-27'-linked ubiquitination of CARD9 downstream of C-type lectin receptors; leading to CARD9 activation, followed by activation of NF-kappa-B and MAP kinase p38 pathways. E3 ubiquitin ligase activity is dependent on E2 ubiquitin-conjugating enzyme UBE2D2. The sequence is that of E3 ubiquitin-protein ligase TRIM62 from Homo sapiens (Human).